Reading from the N-terminus, the 384-residue chain is Deoxyguanosinetriphosphate triphosphohydrolase-like protein (384 aa).

Residues 13 to 42 (LASYASDPSKTRGRRHSEPPPENRTEFQRD) form a disordered region. Over residues 28–42 (HSEPPPENRTEFQRD) the composition is skewed to basic and acidic residues. In terms of domain architecture, HD spans 73–208 (RLTHSLEVAQ…ANLADEVAYN (136 aa)).

It belongs to the dGTPase family. Type 2 subfamily.

The sequence is that of Deoxyguanosinetriphosphate triphosphohydrolase-like protein from Bordetella bronchiseptica (strain ATCC BAA-588 / NCTC 13252 / RB50) (Alcaligenes bronchisepticus).